The sequence spans 1293 residues: Putative DNA-directed RNA polymerase 008R (1293 aa).

The Zn(2+) site is built by cysteine 61, cysteine 64, cysteine 71, histidine 74, cysteine 99, cysteine 102, and cysteine 123. The DNA-binding element occupies 270–339 (TNRKPMAGIK…PVMVTPFNVS (70 aa)). Residues 354 to 376 (EMRDGTVHRPSEWRPSHGDHMET) show a composition bias toward basic and acidic residues. The tract at residues 354–390 (EMRDGTVHRPSEWRPSHGDHMETADGSPLGRVTRPSY) is disordered. Mg(2+)-binding residues include aspartate 474, aspartate 476, and aspartate 478. Positions 724–734 (GQQYVGGSRPG) are alpha-amanitin binding. The tract at residues 776–788 (PREVFFHAKSGRE) is bridging helix.

This sequence belongs to the RNA polymerase beta' chain family.

It carries out the reaction RNA(n) + a ribonucleoside 5'-triphosphate = RNA(n+1) + diphosphate. Functionally, component of the DNA-dependent RNA polymerase that catalyzes the transcription of DNA into RNA using the four ribonucleoside triphosphates as substrates. Largest and catalytic component of RNA polymerase II which synthesizes mRNA precursors and many functional non-coding RNAs. Forms the polymerase active center together with the second largest subunit. This Frog virus 3 (isolate Goorha) (FV-3) protein is Putative DNA-directed RNA polymerase 008R.